Reading from the N-terminus, the 154-residue chain is TSET complex member tstD (154 aa).

It belongs to the adaptor complexes small subunit family. As to quaternary structure, component of the TSET complex, a heterohexamer composed of tstA, tstB, tstC, tstD, tstE and tstF, which may act in plasma membrane turnover. tstA, tstB, tstC and tstD are likely to be the core complex members with tstE and tstF acting as associated scaffold proteins.

The protein resides in the cell membrane. It localises to the cytoplasm. This is TSET complex member tstD from Dictyostelium discoideum (Social amoeba).